The following is a 144-amino-acid chain: Large ribosomal subunit protein uL11 (144 aa).

The protein belongs to the universal ribosomal protein uL11 family. As to quaternary structure, part of the ribosomal stalk of the 50S ribosomal subunit. Interacts with L10 and the large rRNA to form the base of the stalk. L10 forms an elongated spine to which L12 dimers bind in a sequential fashion forming a multimeric L10(L12)X complex. In terms of processing, one or more lysine residues are methylated.

Functionally, forms part of the ribosomal stalk which helps the ribosome interact with GTP-bound translation factors. The polypeptide is Large ribosomal subunit protein uL11 (Nocardia farcinica (strain IFM 10152)).